A 454-amino-acid polypeptide reads, in one-letter code: tRNA modification GTPase MnmE (454 aa).

(6S)-5-formyl-5,6,7,8-tetrahydrofolate-binding residues include Arg-23, Glu-86, and Arg-125. Positions 221 to 376 (GLTLAIVGRP…LREQILRMVS (156 aa)) constitute a TrmE-type G domain. Asn-231 is a binding site for K(+). GTP-binding positions include 231–236 (NVGKSS), 250–256 (TAIPGTT), and 275–278 (DTAG). Ser-235 contacts Mg(2+). Residues Thr-250, Ile-252, and Thr-255 each contribute to the K(+) site. Thr-256 lines the Mg(2+) pocket. Position 454 (Lys-454) interacts with (6S)-5-formyl-5,6,7,8-tetrahydrofolate.

It belongs to the TRAFAC class TrmE-Era-EngA-EngB-Septin-like GTPase superfamily. TrmE GTPase family. Homodimer. Heterotetramer of two MnmE and two MnmG subunits. The cofactor is K(+).

Its subcellular location is the cytoplasm. Exhibits a very high intrinsic GTPase hydrolysis rate. Involved in the addition of a carboxymethylaminomethyl (cmnm) group at the wobble position (U34) of certain tRNAs, forming tRNA-cmnm(5)s(2)U34. The chain is tRNA modification GTPase MnmE from Koribacter versatilis (strain Ellin345).